Here is a 215-residue protein sequence, read N- to C-terminus: Large ribosomal subunit protein uL3 (215 aa).

Gln-153 is subject to N5-methylglutamine.

It belongs to the universal ribosomal protein uL3 family. As to quaternary structure, part of the 50S ribosomal subunit. Forms a cluster with proteins L14 and L19. Post-translationally, methylated by PrmB.

In terms of biological role, one of the primary rRNA binding proteins, it binds directly near the 3'-end of the 23S rRNA, where it nucleates assembly of the 50S subunit. The sequence is that of Large ribosomal subunit protein uL3 from Nitrosococcus oceani (strain ATCC 19707 / BCRC 17464 / JCM 30415 / NCIMB 11848 / C-107).